The sequence spans 459 residues: Ribulose bisphosphate carboxylase (459 aa).

Asparagine 111 is a binding site for substrate. Residue lysine 166 is the Proton acceptor of the active site. Lysine 168 is a binding site for substrate. Residues lysine 191, aspartate 193, and glutamate 194 each contribute to the Mg(2+) site. Lysine 191 carries the post-translational modification N6-carboxylysine. Histidine 287 acts as the Proton acceptor in catalysis. Substrate-binding residues include arginine 288, histidine 321, and serine 368.

This sequence belongs to the RuBisCO large chain family. Type II subfamily. As to quaternary structure, homodimer. Mg(2+) is required as a cofactor.

It carries out the reaction 2 (2R)-3-phosphoglycerate + 2 H(+) = D-ribulose 1,5-bisphosphate + CO2 + H2O. The enzyme catalyses D-ribulose 1,5-bisphosphate + O2 = 2-phosphoglycolate + (2R)-3-phosphoglycerate + 2 H(+). In terms of biological role, ruBisCO catalyzes two reactions: the carboxylation of D-ribulose 1,5-bisphosphate, the primary event in carbon dioxide fixation, as well as the oxidative fragmentation of the pentose substrate. Both reactions occur simultaneously and in competition at the same active site. The sequence is that of Ribulose bisphosphate carboxylase from Cereibacter sphaeroides (Rhodobacter sphaeroides).